Reading from the N-terminus, the 167-residue chain is RNA pyrophosphohydrolase (167 aa).

The region spanning 8-159 (PYRTCVGVML…KRPVYERVVK (152 aa)) is the Nudix hydrolase domain. The Nudix box signature appears at 47-68 (GGVDPGEDTWAAAKRELYEETS).

The protein belongs to the Nudix hydrolase family. RppH subfamily. Requires a divalent metal cation as cofactor.

Accelerates the degradation of transcripts by removing pyrophosphate from the 5'-end of triphosphorylated RNA, leading to a more labile monophosphorylated state that can stimulate subsequent ribonuclease cleavage. In Bradyrhizobium diazoefficiens (strain JCM 10833 / BCRC 13528 / IAM 13628 / NBRC 14792 / USDA 110), this protein is RNA pyrophosphohydrolase.